Consider the following 324-residue polypeptide: MKKKIWKSSASIEDLIKRSNIISNIRLFFSKKNILEVETPILSRSTVTDVHLTSFETNYISSDNIDELKLWLTTSPEYHMKRLLASESGSIYQICHSFRNKEIGRYHNPEFTMLEWYQPFCSMKKFIKEIDIFLQIILKCNKSDKVSYQDLFIDFLKIDPLCTNLLELHQISKKLKLDHLTHSENNLNKLIQLLFTLKIEPNIGKEKPLFVYHFPAEQASLAAINLKDPRISERFEIFFKGIELGNGFYELIDVNEQKKRFIRDNKERRSMNLPTRKIDNFFLSALSYGLPPCSGVAIGLDRLIMLILNKKSIHEVIAFPVDRC.

Residue 75 to 77 (SPE) participates in substrate binding. ATP-binding positions include 99 to 101 (RNK) and Asn108. Tyr117 serves as a coordination point for substrate. 243–244 (EL) serves as a coordination point for ATP. Residue Glu250 participates in substrate binding. Gly299 contributes to the ATP binding site.

This sequence belongs to the class-II aminoacyl-tRNA synthetase family. EpmA subfamily. As to quaternary structure, homodimer.

The catalysed reaction is D-beta-lysine + L-lysyl-[protein] + ATP = N(6)-((3R)-3,6-diaminohexanoyl)-L-lysyl-[protein] + AMP + diphosphate + H(+). Its function is as follows. With EpmB is involved in the beta-lysylation step of the post-translational modification of translation elongation factor P (EF-P). Catalyzes the ATP-dependent activation of (R)-beta-lysine produced by EpmB, forming a lysyl-adenylate, from which the beta-lysyl moiety is then transferred to the epsilon-amino group of a conserved specific lysine residue in EF-P. The protein is Elongation factor P--(R)-beta-lysine ligase of Buchnera aphidicola subsp. Acyrthosiphon pisum (strain APS) (Acyrthosiphon pisum symbiotic bacterium).